Reading from the N-terminus, the 316-residue chain is ATP synthase gamma chain (316 aa).

This sequence belongs to the ATPase gamma chain family. In terms of assembly, F-type ATPases have 2 components, CF(1) - the catalytic core - and CF(0) - the membrane proton channel. CF(1) has five subunits: alpha(3), beta(3), gamma(1), delta(1), epsilon(1). CF(0) has three main subunits: a, b and c.

Its subcellular location is the cellular thylakoid membrane. Its function is as follows. Produces ATP from ADP in the presence of a proton gradient across the membrane. The gamma chain is believed to be important in regulating ATPase activity and the flow of protons through the CF(0) complex. This chain is ATP synthase gamma chain, found in Prochlorococcus marinus (strain MIT 9303).